The sequence spans 41 residues: Submaxillary gland androgen-regulated protein 2, isoform beta (41 aa).

A signal peptide spans 1-22; the sequence is MKALYMVFVLWVLIGCFLRLLK.

The protein localises to the secreted. Functionally, may play a role in protection or detoxification. This chain is Submaxillary gland androgen-regulated protein 2, isoform beta (Smr2), found in Mus musculus (Mouse).